We begin with the raw amino-acid sequence, 263 residues long: Type III pantothenate kinase (263 aa).

ATP is bound at residue 6 to 13 (DVGNTRIK). Residues Tyr92 and 99-102 (GTDR) each bind substrate. The active-site Proton acceptor is Asp101. An ATP-binding site is contributed by Thr124. Thr174 lines the substrate pocket.

The protein belongs to the type III pantothenate kinase family. Homodimer. Requires NH4(+) as cofactor. K(+) is required as a cofactor.

Its subcellular location is the cytoplasm. It catalyses the reaction (R)-pantothenate + ATP = (R)-4'-phosphopantothenate + ADP + H(+). The protein operates within cofactor biosynthesis; coenzyme A biosynthesis; CoA from (R)-pantothenate: step 1/5. Functionally, catalyzes the phosphorylation of pantothenate (Pan), the first step in CoA biosynthesis. The protein is Type III pantothenate kinase of Azoarcus sp. (strain BH72).